A 419-amino-acid chain; its full sequence is Zinc finger protein Pegasus (419 aa).

Residue K5 forms a Glycyl lysine isopeptide (Lys-Gly) (interchain with G-Cter in SUMO2) linkage. C2H2-type zinc fingers lie at residues 82-104 (LKCR…IRIH), 110-132 (HRCH…MRSH), and 138-161 (YKCE…RRKH). Residue K185 forms a Glycyl lysine isopeptide (Lys-Gly) (interchain with G-Cter in SUMO2) linkage. A compositionally biased stretch (polar residues) spans 223-236 (QTDSYESMAKTTPT). Disordered regions lie at residues 223–245 (QTDS…DPQE) and 288–356 (MQQP…PTLP). Low complexity predominate over residues 289–311 (QQPSAQAVVSAVSASLPQSSSPA). Over residues 332–349 (SEPSAHTSTPSMGNSQPS) the composition is skewed to polar residues. C2H2-type zinc fingers lie at residues 364–386 (HHCQ…MGCH) and 392–416 (FQCN…RGQH).

The protein belongs to the Ikaros C2H2-type zinc-finger protein family. Self-associates. Interacts with other family members; IKZF1, IKZF2, IKZF3 and IKZF4.

The protein resides in the nucleus. In terms of biological role, transcriptional repressor that binds the core 5'GNNTGTNG-3' DNA consensus sequence. Involved in megakaryocyte differentiation. The polypeptide is Zinc finger protein Pegasus (IKZF5) (Bos taurus (Bovine)).